The primary structure comprises 417 residues: Lipoyl synthase, mitochondrial (417 aa).

The interval 35 to 56 (EANPTDLAGLKRKAKRRPTKLA) is disordered. Positions 44 to 53 (LKRKAKRRPT) are enriched in basic residues. Residues Cys122, Cys127, Cys133, Cys152, Cys156, Cys159, and Ser367 each contribute to the [4Fe-4S] cluster site. The region spanning 137–356 (KKSEATATIM…RDKALEMGFL (220 aa)) is the Radical SAM core domain. A disordered region spans residues 389 to 417 (IEEQQHDKENNNLLLSKEDEKTTQEKANF). The segment covering 391–417 (EQQHDKENNNLLLSKEDEKTTQEKANF) has biased composition (basic and acidic residues).

The protein belongs to the radical SAM superfamily. Lipoyl synthase family. Requires [4Fe-4S] cluster as cofactor.

The protein resides in the mitochondrion. It catalyses the reaction [[Fe-S] cluster scaffold protein carrying a second [4Fe-4S](2+) cluster] + N(6)-octanoyl-L-lysyl-[protein] + 2 oxidized [2Fe-2S]-[ferredoxin] + 2 S-adenosyl-L-methionine + 4 H(+) = [[Fe-S] cluster scaffold protein] + N(6)-[(R)-dihydrolipoyl]-L-lysyl-[protein] + 4 Fe(3+) + 2 hydrogen sulfide + 2 5'-deoxyadenosine + 2 L-methionine + 2 reduced [2Fe-2S]-[ferredoxin]. The protein operates within protein modification; protein lipoylation via endogenous pathway; protein N(6)-(lipoyl)lysine from octanoyl-[acyl-carrier-protein]: step 2/2. Its function is as follows. Catalyzes the radical-mediated insertion of two sulfur atoms into the C-6 and C-8 positions of the octanoyl moiety bound to the lipoyl domains of lipoate-dependent enzymes, thereby converting the octanoylated domains into lipoylated derivatives. In Komagataella phaffii (strain GS115 / ATCC 20864) (Yeast), this protein is Lipoyl synthase, mitochondrial.